We begin with the raw amino-acid sequence, 186 residues long: Crossover junction endodeoxyribonuclease RuvC (186 aa).

Residues Asp-7, Glu-67, and Asp-140 contribute to the active site. 3 residues coordinate Mg(2+): Asp-7, Glu-67, and Asp-140.

This sequence belongs to the RuvC family. In terms of assembly, homodimer which binds Holliday junction (HJ) DNA. The HJ becomes 2-fold symmetrical on binding to RuvC with unstacked arms; it has a different conformation from HJ DNA in complex with RuvA. In the full resolvosome a probable DNA-RuvA(4)-RuvB(12)-RuvC(2) complex forms which resolves the HJ. Mg(2+) is required as a cofactor.

The protein resides in the cytoplasm. The enzyme catalyses Endonucleolytic cleavage at a junction such as a reciprocal single-stranded crossover between two homologous DNA duplexes (Holliday junction).. The RuvA-RuvB-RuvC complex processes Holliday junction (HJ) DNA during genetic recombination and DNA repair. Endonuclease that resolves HJ intermediates. Cleaves cruciform DNA by making single-stranded nicks across the HJ at symmetrical positions within the homologous arms, yielding a 5'-phosphate and a 3'-hydroxyl group; requires a central core of homology in the junction. The consensus cleavage sequence is 5'-(A/T)TT(C/G)-3'. Cleavage occurs on the 3'-side of the TT dinucleotide at the point of strand exchange. HJ branch migration catalyzed by RuvA-RuvB allows RuvC to scan DNA until it finds its consensus sequence, where it cleaves and resolves the cruciform DNA. The chain is Crossover junction endodeoxyribonuclease RuvC from Chloroherpeton thalassium (strain ATCC 35110 / GB-78).